The following is a 164-amino-acid chain: Crossover junction endodeoxyribonuclease RuvC (164 aa).

Catalysis depends on residues Asp-7, Glu-67, and Asp-140. Positions 7, 67, and 140 each coordinate Mg(2+).

It belongs to the RuvC family. As to quaternary structure, homodimer which binds Holliday junction (HJ) DNA. The HJ becomes 2-fold symmetrical on binding to RuvC with unstacked arms; it has a different conformation from HJ DNA in complex with RuvA. In the full resolvosome a probable DNA-RuvA(4)-RuvB(12)-RuvC(2) complex forms which resolves the HJ. Mg(2+) serves as cofactor.

The protein localises to the cytoplasm. The enzyme catalyses Endonucleolytic cleavage at a junction such as a reciprocal single-stranded crossover between two homologous DNA duplexes (Holliday junction).. In terms of biological role, the RuvA-RuvB-RuvC complex processes Holliday junction (HJ) DNA during genetic recombination and DNA repair. Endonuclease that resolves HJ intermediates. Cleaves cruciform DNA by making single-stranded nicks across the HJ at symmetrical positions within the homologous arms, yielding a 5'-phosphate and a 3'-hydroxyl group; requires a central core of homology in the junction. The consensus cleavage sequence is 5'-(A/T)TT(C/G)-3'. Cleavage occurs on the 3'-side of the TT dinucleotide at the point of strand exchange. HJ branch migration catalyzed by RuvA-RuvB allows RuvC to scan DNA until it finds its consensus sequence, where it cleaves and resolves the cruciform DNA. The chain is Crossover junction endodeoxyribonuclease RuvC from Finegoldia magna (strain ATCC 29328 / DSM 20472 / WAL 2508) (Peptostreptococcus magnus).